The sequence spans 265 residues: Protein synthesis inhibitor PD-S2 (265 aa).

2 disulfide bridges follow: C34–C262 and C88–C110. A glycan (N-linked (GlcNAc...) asparagine) is linked at N120.

Belongs to the ribosome-inactivating protein family. Type 1 RIP subfamily. In terms of processing, glycosylated. Seeds.

The enzyme catalyses Endohydrolysis of the N-glycosidic bond at one specific adenosine on the 28S rRNA.. Inhibits protein synthesis in animal cells. Useful as immunotoxin for pharmacological applications. The polypeptide is Protein synthesis inhibitor PD-S2 (Phytolacca dioica (Bella sombra tree)).